Consider the following 198-residue polypeptide: ATP synthase subunit delta (198 aa).

It belongs to the ATPase delta chain family. In terms of assembly, F-type ATPases have 2 components, F(1) - the catalytic core - and F(0) - the membrane proton channel. F(1) has five subunits: alpha(3), beta(3), gamma(1), delta(1), epsilon(1). F(0) has three main subunits: a(1), b(2) and c(10-14). The alpha and beta chains form an alternating ring which encloses part of the gamma chain. F(1) is attached to F(0) by a central stalk formed by the gamma and epsilon chains, while a peripheral stalk is formed by the delta and b chains.

It localises to the cell inner membrane. In terms of biological role, f(1)F(0) ATP synthase produces ATP from ADP in the presence of a proton or sodium gradient. F-type ATPases consist of two structural domains, F(1) containing the extramembraneous catalytic core and F(0) containing the membrane proton channel, linked together by a central stalk and a peripheral stalk. During catalysis, ATP synthesis in the catalytic domain of F(1) is coupled via a rotary mechanism of the central stalk subunits to proton translocation. Its function is as follows. This protein is part of the stalk that links CF(0) to CF(1). It either transmits conformational changes from CF(0) to CF(1) or is implicated in proton conduction. The protein is ATP synthase subunit delta of Gluconacetobacter diazotrophicus (strain ATCC 49037 / DSM 5601 / CCUG 37298 / CIP 103539 / LMG 7603 / PAl5).